A 274-amino-acid chain; its full sequence is Penicillin-insensitive murein endopeptidase (274 aa).

An N-terminal signal peptide occupies residues 1-19 (MKNTVIALLALLASAGSLA). Cystine bridges form between C44/C265, C187/C235, and C216/C223. Zn(2+)-binding residues include H110, H113, D120, D147, H150, and H211. The segment at 224–263 (EDQAPPPPGDGCGAELQSWFEPPKPGSTPPVKKTPPPLPP) is disordered. Residues 245–263 (PPKPGSTPPVKKTPPPLPP) are compositionally biased toward pro residues.

The protein belongs to the peptidase M74 family. Dimer. The cofactor is Zn(2+).

It is found in the periplasm. In terms of biological role, murein endopeptidase that cleaves the D-alanyl-meso-2,6-diamino-pimelyl amide bond that connects peptidoglycan strands. Likely plays a role in the removal of murein from the sacculus. This chain is Penicillin-insensitive murein endopeptidase, found in Klebsiella pneumoniae subsp. pneumoniae (strain ATCC 700721 / MGH 78578).